The sequence spans 268 residues: Receptor expression-enhancing protein 2 (268 aa).

A run of 2 helical transmembrane segments spans residues 1-21 (MVSW…YPAY) and 35-55 (YVKW…ETIT). The segment at 170 to 268 (GDDTHTAATL…TTANNVAESP (99 aa)) is disordered. Positions 180–196 (PRAKTATRTVRATPVPA) are enriched in low complexity. Residues 199-216 (ESQHSSRSDDQSDSRTEH) show a composition bias toward basic and acidic residues. The span at 228-248 (RIAITRAAKKPAAAKTEQTTK) shows a compositional bias: low complexity. The span at 249-258 (TVKKAPKKKP) shows a compositional bias: basic residues.

It belongs to the DP1 family. Interacts with odorant receptor proteins.

The protein resides in the membrane. In terms of biological role, may enhance the cell surface expression of odorant receptors. This chain is Receptor expression-enhancing protein 2 (reep2), found in Danio rerio (Zebrafish).